The chain runs to 47 residues: uncharacterized protein (47 aa).

This is an uncharacterized protein from Bacillus subtilis (strain 168).